Here is a 164-residue protein sequence, read N- to C-terminus: Endoribonuclease YbeY (164 aa).

Zn(2+) is bound by residues His111, His115, and His121. Positions 140 to 164 (ELGHPDPYADDDAQKHSTVTIKDSE) are disordered. Residues 155-164 (HSTVTIKDSE) show a composition bias toward polar residues.

It belongs to the endoribonuclease YbeY family. The cofactor is Zn(2+).

Its subcellular location is the cytoplasm. In terms of biological role, single strand-specific metallo-endoribonuclease involved in late-stage 70S ribosome quality control and in maturation of the 3' terminus of the 16S rRNA. In Pseudomonas fluorescens (strain SBW25), this protein is Endoribonuclease YbeY.